The primary structure comprises 178 residues: Large ribosomal subunit protein uL10 (178 aa).

Belongs to the universal ribosomal protein uL10 family. In terms of assembly, part of the ribosomal stalk of the 50S ribosomal subunit. The N-terminus interacts with L11 and the large rRNA to form the base of the stalk. The C-terminus forms an elongated spine to which L12 dimers bind in a sequential fashion forming a multimeric L10(L12)X complex.

In terms of biological role, forms part of the ribosomal stalk, playing a central role in the interaction of the ribosome with GTP-bound translation factors. In Leuconostoc mesenteroides subsp. mesenteroides (strain ATCC 8293 / DSM 20343 / BCRC 11652 / CCM 1803 / JCM 6124 / NCDO 523 / NBRC 100496 / NCIMB 8023 / NCTC 12954 / NRRL B-1118 / 37Y), this protein is Large ribosomal subunit protein uL10.